We begin with the raw amino-acid sequence, 368 residues long: Phosphate acyltransferase (368 aa).

The disordered stretch occupies residues 337–368 (LGEGEHNAGGAGHASPAAGHHAEPSAAQSSKA). Over residues 349 to 368 (HASPAAGHHAEPSAAQSSKA) the composition is skewed to low complexity.

The protein belongs to the PlsX family. Homodimer. Probably interacts with PlsY.

It is found in the cytoplasm. The enzyme catalyses a fatty acyl-[ACP] + phosphate = an acyl phosphate + holo-[ACP]. It participates in lipid metabolism; phospholipid metabolism. Functionally, catalyzes the reversible formation of acyl-phosphate (acyl-PO(4)) from acyl-[acyl-carrier-protein] (acyl-ACP). This enzyme utilizes acyl-ACP as fatty acyl donor, but not acyl-CoA. This is Phosphate acyltransferase from Burkholderia lata (strain ATCC 17760 / DSM 23089 / LMG 22485 / NCIMB 9086 / R18194 / 383).